The primary structure comprises 262 residues: GTP cyclohydrolase 1 type 2 homolog (262 aa).

A divalent metal cation-binding residues include histidine 65, aspartate 102, histidine 222, and glutamate 225.

This sequence belongs to the GTP cyclohydrolase I type 2/NIF3 family. In terms of assembly, homohexamer.

The polypeptide is GTP cyclohydrolase 1 type 2 homolog (Streptococcus pyogenes serotype M3 (strain ATCC BAA-595 / MGAS315)).